Consider the following 507-residue polypeptide: UDP-N-acetylmuramoyl-L-alanyl-D-glutamate--2,6-diaminopimelate ligase (507 aa).

Ser32 contributes to the UDP-N-acetyl-alpha-D-muramoyl-L-alanyl-D-glutamate binding site. Residue 117–123 (GTNGKTT) coordinates ATP. UDP-N-acetyl-alpha-D-muramoyl-L-alanyl-D-glutamate contacts are provided by residues 159–160 (TT), Ser186, Gln192, and Arg194. Position 226 is an N6-carboxylysine (Lys226). Meso-2,6-diaminopimelate contacts are provided by residues Arg400, 424–427 (DNPR), Gly475, and Glu479. Residues 424 to 427 (DNPR) carry the Meso-diaminopimelate recognition motif motif.

Belongs to the MurCDEF family. MurE subfamily. Mg(2+) serves as cofactor. Post-translationally, carboxylation is probably crucial for Mg(2+) binding and, consequently, for the gamma-phosphate positioning of ATP.

The protein localises to the cytoplasm. It carries out the reaction UDP-N-acetyl-alpha-D-muramoyl-L-alanyl-D-glutamate + meso-2,6-diaminopimelate + ATP = UDP-N-acetyl-alpha-D-muramoyl-L-alanyl-gamma-D-glutamyl-meso-2,6-diaminopimelate + ADP + phosphate + H(+). It functions in the pathway cell wall biogenesis; peptidoglycan biosynthesis. Its function is as follows. Catalyzes the addition of meso-diaminopimelic acid to the nucleotide precursor UDP-N-acetylmuramoyl-L-alanyl-D-glutamate (UMAG) in the biosynthesis of bacterial cell-wall peptidoglycan. In Prochlorococcus marinus (strain MIT 9313), this protein is UDP-N-acetylmuramoyl-L-alanyl-D-glutamate--2,6-diaminopimelate ligase.